The following is a 322-amino-acid chain: MDSKHSMISLKQKLSGLLDVIPKQSEIIYADYPLYGNVGDLFIMKGTEAFFKEHGIRVRKRWNPDNFPIGRKLDPNLIIVCQGGGNFGDLYPYYQGFREKIVQTYPNHKIVILPQSIYFQNKDNLKRTAEIFSKHANLHIMTREKASYATAQAYFTTNHIQLLPDMAHQLFPVIPTQQPSNQKLRFIRTDHEANQALQEHAEAESYDWRTVLSASDRRTIAFLQTLNVLNKKAGNPLPIAYIWEKYSDYIVQKAIRFFSRYESVETSRLHGHILSSLLQKENTVIDNSYGKNANYFHTWMEGVPSTRLIQHASKKENLPAHM.

The protein belongs to the polysaccharide pyruvyl transferase family.

May be involved in the production of the exopolysaccharide (EPS) component of the extracellular matrix during biofilm formation. EPS is responsible for the adhesion of chains of cells into bundles. The protein is Putative pyruvyl transferase EpsO (epsO) of Bacillus subtilis (strain 168).